The sequence spans 457 residues: Putative hexose transporter 12 (457 aa).

Residues 1–2 (MG) are Cytoplasmic-facing. A helical membrane pass occupies residues 3–23 (LIVSIFNIGCAIGGIVLSKVG). Topologically, residues 24 to 29 (DIYGRR) are extracellular. The chain crosses the membrane as a helical span at residues 30 to 50 (IGLITVTAIYVVGILIQITSI). Residues 51-60 (NKWYQYFIGR) are Cytoplasmic-facing. Residues 61–81 (IISGIGVGGIAVLSPMLISEV) form a helical membrane-spanning segment. Residues 82 to 87 (APKHIR) lie on the Extracellular side of the membrane. Residues 88–108 (GTLVQLYQLMGTMGIFLGYCT) traverse the membrane as a helical segment. The Cytoplasmic portion of the chain corresponds to 109–122 (NYGTKNYHNATQWR). The chain crosses the membrane as a helical span at residues 123–143 (VGLGLCFAWATFMVSGMMFVP). At 144–247 (ESPRYLIEVG…KSVGLKDSFQ (104 aa)) the chain is on the extracellular side. N-linked (GlcNAc...) asparagine glycosylation occurs at N194. Residues 248–268 (TSIIIGVVNFFSSFIAVYTIE) traverse the membrane as a helical segment. Topologically, residues 269-274 (RFGRRT) are cytoplasmic. The helical transmembrane segment at 275–295 (CLLWGAASMLCCFAVFASVGV) threads the bilayer. At 296–319 (TKLWPQGSSHQDITSQGAGNCMIV) the chain is on the extracellular side. A helical membrane pass occupies residues 320–340 (FTMFFIFSFATTWAGGCFVIV). Residues 341–353 (SETFPLRAKSRGM) are Cytoplasmic-facing. A helical membrane pass occupies residues 354-374 (AIATAANWMWGFLISFFTPFI). At 375 to 379 (TGAIN) the chain is on the extracellular side. Residues 380 to 400 (FYYGYVFLGCLVFAYFYVFFF) form a helical membrane-spanning segment. The Cytoplasmic segment spans residues 401 to 457 (VPETKGLTLEEVNTMWLEGVPAWKSASWVPPERRTADYDADAIDHDNRPIYKRFFSS).

This sequence belongs to the major facilitator superfamily. Sugar transporter (TC 2.A.1.1) family.

The protein localises to the membrane. In terms of biological role, probable glucose transporter. This is Putative hexose transporter 12 (HXT12) from Saccharomyces cerevisiae (strain ATCC 204508 / S288c) (Baker's yeast).